Consider the following 624-residue polypeptide: Phosphomethylpyrimidine synthase (624 aa).

A disordered region spans residues 48-70 (SDTHTSQGREKNPPLTVYDTSGP). Substrate is bound by residues N229, M258, Y287, H323, 343-345 (SRG), 384-387 (DGLR), and E423. H427 contacts Zn(2+). Substrate is bound at residue Y450. H491 provides a ligand contact to Zn(2+). [4Fe-4S] cluster-binding residues include C571, C574, and C579.

This sequence belongs to the ThiC family. Homodimer. Requires [4Fe-4S] cluster as cofactor.

The catalysed reaction is 5-amino-1-(5-phospho-beta-D-ribosyl)imidazole + S-adenosyl-L-methionine = 4-amino-2-methyl-5-(phosphooxymethyl)pyrimidine + CO + 5'-deoxyadenosine + formate + L-methionine + 3 H(+). It participates in cofactor biosynthesis; thiamine diphosphate biosynthesis. Its function is as follows. Catalyzes the synthesis of the hydroxymethylpyrimidine phosphate (HMP-P) moiety of thiamine from aminoimidazole ribotide (AIR) in a radical S-adenosyl-L-methionine (SAM)-dependent reaction. The polypeptide is Phosphomethylpyrimidine synthase (Nitrosococcus oceani (strain ATCC 19707 / BCRC 17464 / JCM 30415 / NCIMB 11848 / C-107)).